The chain runs to 210 residues: Phosphate propanoyltransferase (210 aa).

A CoA-binding site is contributed by 26–28 (VSN). Zn(2+) contacts are provided by His30 and His32. CoA contacts are provided by Lys71 and Arg78. Arg84 contributes to the phosphate binding site. Zn(2+) contacts are provided by Glu90, His138, His140, and His186. Residue Asn193 coordinates CoA.

The protein belongs to the PduL family. Monomer, when purified in the absence of the encapsulation peptide (EP, residues 1-27). The EP may influence oligomerization. Requires Zn(2+) as cofactor.

It localises to the bacterial microcompartment. The enzyme catalyses propanoyl-CoA + phosphate = propanoyl phosphate + CoA. It participates in polyol metabolism; 1,2-propanediol degradation. Its function is as follows. Involved in 1,2-propanediol (1,2-PD) utilization in the bacterial microcompartment (BMC) dedicated to 1,2-PD degradation by catalyzing the conversion of propanoyl-CoA to propanoyl-phosphate. Also able to catalyze the reverse reaction. Also has phosphate acetyltransferase activity to a lesser extent. Required for optimal growth on 1,2-PD when the BMC is intact. CoA is regenerated within the BMC (for use by PduP) via this enzyme, although there must also be cofactor transport across the BMC. Directly targeted to the BMC. The 1,2-PD-specific bacterial microcompartment (BMC) concentrates low levels of 1,2-PD catabolic enzymes, concentrates volatile reaction intermediates thus enhancing pathway flux and keeps the level of toxic, mutagenic propionaldehyde low. The sequence is that of Phosphate propanoyltransferase from Salmonella typhimurium (strain LT2 / SGSC1412 / ATCC 700720).